Consider the following 365-residue polypeptide: Sulfate/thiosulfate import ATP-binding protein CysA (365 aa).

Residues 3 to 237 form the ABC transporter domain; it reads IEIANIKKSF…PATRFVLEFM (235 aa). 35–42 provides a ligand contact to ATP; sequence GPSGSGKT.

This sequence belongs to the ABC transporter superfamily. Sulfate/tungstate importer (TC 3.A.1.6) family. As to quaternary structure, the complex is composed of two ATP-binding proteins (CysA), two transmembrane proteins (CysT and CysW) and a solute-binding protein (CysP).

Its subcellular location is the cell inner membrane. It carries out the reaction sulfate(out) + ATP + H2O = sulfate(in) + ADP + phosphate + H(+). It catalyses the reaction thiosulfate(out) + ATP + H2O = thiosulfate(in) + ADP + phosphate + H(+). Its function is as follows. Part of the ABC transporter complex CysAWTP involved in sulfate/thiosulfate import. Responsible for energy coupling to the transport system. The polypeptide is Sulfate/thiosulfate import ATP-binding protein CysA (Shigella flexneri).